Here is a 932-residue protein sequence, read N- to C-terminus: uncharacterized protein (932 aa).

Disordered stretches follow at residues 26–120, 158–289, 304–617, 635–720, and 802–863; these read NINN…NMLT, MGIG…EEKK, NNNN…INHD, QQSQ…PPLV, and SVSS…FPLE. Composition is skewed to low complexity over residues 41–105 and 163–241; these read NNNI…IISS and NNNN…YGNN. Positions 242 to 253 are enriched in polar residues; it reads TPVNYIHNNSTP. A compositionally biased stretch (acidic residues) spans 265 to 285; it reads SDEEDSVLYSSDDSEESDYEE. Over residues 304-475 the composition is skewed to low complexity; that stretch reads NNNNINNNNM…NNNNNNNNNN (172 aa). Polar residues-rich tracts occupy residues 476-492 and 527-540; these read ENYVGSSLSNSADNTES and DIPNSYPISPTKQQ. The segment covering 548-590 has biased composition (low complexity); it reads SPVYSPPNNLSPLSSPYLHHNSNNNSNNGGGNSNNNNTNFNYG. Basic and acidic residues predominate over residues 606–617; the sequence is GERDPPHVINHD. 3 stretches are compositionally biased toward low complexity: residues 635-666, 696-707, and 813-853; these read QQSQHQHQQQQQQPQSQQQPFYSPYQSPPSSS, SPPNTSISSLSS, and NSSN…NNNS. Positions 854-863 are enriched in basic and acidic residues; it reads EPKKPKFPLE.

This is an uncharacterized protein from Dictyostelium discoideum (Social amoeba).